The chain runs to 430 residues: Uric acid permease PucK (430 aa).

Helical transmembrane passes span 18 to 38, 43 to 63, 67 to 87, 97 to 117, 122 to 142, 163 to 183, 185 to 205, 209 to 229, 233 to 253, 274 to 294, 310 to 330, 333 to 353, 369 to 389, and 398 to 418; these read MLAM…AIGL, LTYL…LQLW, YFGI…GPMI, AIYG…GFFG, FFPP…LIPT, LLGF…KGFI, SIAI…MGKV, EVLE…PPTF, AVVT…GVYF, AEGL…TAFS, VIAI…AAAL, VIPT…VISY, LLII…PALF, and VLAG…HAFF.

The protein belongs to the nucleobase:cation symporter-2 (NCS2) (TC 2.A.40) family.

It is found in the cell membrane. Uptake of uric acid. The chain is Uric acid permease PucK (pucK) from Bacillus subtilis (strain 168).